The primary structure comprises 358 residues: C-X-C chemokine receptor type 4-B (358 aa).

The segment at 1-25 is important for chemokine binding and signaling; it reads MDGFSGGIDINIFDGNSTENGSGDF. The Extracellular segment spans residues 1-44; sequence MDGFSGGIDINIFDGNSTENGSGDFEDFIEPCFMQENSDFNRIF. 2 N-linked (GlcNAc...) asparagine glycosylation sites follow: asparagine 16 and asparagine 20. Cystine bridges form between cysteine 32-cysteine 281 and cysteine 113-cysteine 190. Residues 45–67 form a helical membrane-spanning segment; it reads LPTIYSFIFLLGIIGNGLVVVVM. At 68–81 the chain is on the cytoplasmic side; sequence GYQKKSRTMTDKYR. The chain crosses the membrane as a helical span at residues 82-103; it reads LHLSVADLLFVFTLPFWSVDAA. Positions 98–101 are chemokine binding; that stretch reads WSVD. Over 104 to 114 the chain is Extracellular; it reads IGWYFKEFLCK. A helical membrane pass occupies residues 115-134; that stretch reads AVHVIYTVNLYSSVLILAFI. A chemokine binding region spans residues 117–121; it reads HVIYT. Residues 135–158 lie on the Cytoplasmic side of the membrane; the sequence is SLDRYLAIVHATNSQGSRKMLADK. The involved in dimerization; when bound to chemokine stretch occupies residues 139–151; it reads YLAIVHATNSQGS. A helical transmembrane segment spans residues 159–178; it reads VVYAGVWLPALLLTVPDLVF. The Extracellular portion of the chain corresponds to 179 to 202; the sequence is ASVSNENGQFVCDRIYPIDNRETW. Positions 190–194 are chemokine binding, important for signaling; that stretch reads CDRIY. Residues 203–223 form a helical membrane-spanning segment; it reads TVGFRFLHITVGLILPGLIIL. Over 224–248 the chain is Cytoplasmic; that stretch reads VCYCVIISKLSHSKGHQKRKALKTT. A helical membrane pass occupies residues 249 to 268; it reads VILILAFFACWLPYYVCLTT. The Extracellular portion of the chain corresponds to 269–289; the sequence is DTFMMLGLVKADCIWENTLHK. The helical transmembrane segment at 290-309 threads the bilayer; it reads AISITEALAFFHCCLNPILY. Residues 310–358 lie on the Cytoplasmic side of the membrane; it reads AFLGAKFKKSAQNAFTSVSRGSSLKILSKKRAGLSSVSTESESSSFHSS. The segment at 338-358 is disordered; it reads KKRAGLSSVSTESESSSFHSS. A compositionally biased stretch (low complexity) spans 344 to 358; that stretch reads SSVSTESESSSFHSS.

It belongs to the G-protein coupled receptor 1 family. Monomer. Can form dimers. Post-translationally, sulfation is required for efficient binding of cxcl12/sdf-1alpha and promotes its dimerization. In terms of processing, O- and N-glycosylated.

It is found in the cell membrane. The protein resides in the cytoplasm. Its subcellular location is the nucleus. The protein localises to the early endosome. It localises to the late endosome. It is found in the lysosome. Its function is as follows. Receptor for the C-X-C chemokine cxcl12/sdf-1. Transduces a signal by increasing the intracellular level of calcium ions. Signaling with cxcl12/sdf-1 mediates the directional movement of mesodermal cells during gastrulation. May play a role in the migration of embryonic presumptive primordial germ cells (pPGCs). May also be involved in regulating migration of hematopoietic stem cells into the larval liver. The chain is C-X-C chemokine receptor type 4-B (cxcr4-b) from Xenopus laevis (African clawed frog).